A 475-amino-acid polypeptide reads, in one-letter code: Aspartyl/glutamyl-tRNA(Asn/Gln) amidotransferase subunit B (475 aa).

Belongs to the GatB/GatE family. GatB subfamily. As to quaternary structure, heterotrimer of A, B and C subunits.

It catalyses the reaction L-glutamyl-tRNA(Gln) + L-glutamine + ATP + H2O = L-glutaminyl-tRNA(Gln) + L-glutamate + ADP + phosphate + H(+). The catalysed reaction is L-aspartyl-tRNA(Asn) + L-glutamine + ATP + H2O = L-asparaginyl-tRNA(Asn) + L-glutamate + ADP + phosphate + 2 H(+). Functionally, allows the formation of correctly charged Asn-tRNA(Asn) or Gln-tRNA(Gln) through the transamidation of misacylated Asp-tRNA(Asn) or Glu-tRNA(Gln) in organisms which lack either or both of asparaginyl-tRNA or glutaminyl-tRNA synthetases. The reaction takes place in the presence of glutamine and ATP through an activated phospho-Asp-tRNA(Asn) or phospho-Glu-tRNA(Gln). The chain is Aspartyl/glutamyl-tRNA(Asn/Gln) amidotransferase subunit B from Chlorobaculum tepidum (strain ATCC 49652 / DSM 12025 / NBRC 103806 / TLS) (Chlorobium tepidum).